The sequence spans 580 residues: Tripeptidyl-peptidase sed5 (580 aa).

Residues 1 to 21 (MYPLDGSARPHPPGTTRLNSV) are disordered. Residues 181-567 (RAQRLIVAEL…RRTLEELRRI (387 aa)) enclose the Peptidase S53 domain. N-linked (GlcNAc...) asparagine glycosylation is present at N236. Residues E269, D273, and S479 each act as charge relay system in the active site. The Ca(2+) site is built by D523 and I524. A glycan (N-linked (GlcNAc...) asparagine) is linked at N529. 3 residues coordinate Ca(2+): G543, G545, and D547.

Requires Ca(2+) as cofactor.

The protein resides in the secreted. Its subcellular location is the extracellular space. The catalysed reaction is Release of an N-terminal tripeptide from a polypeptide.. Its function is as follows. Secreted tripeptidyl-peptidase which degrades proteins at acidic pHs and is involved in virulence. The sequence is that of Tripeptidyl-peptidase sed5 (sed5) from Aspergillus fumigatus (strain ATCC MYA-4609 / CBS 101355 / FGSC A1100 / Af293) (Neosartorya fumigata).